A 621-amino-acid polypeptide reads, in one-letter code: Polycystin-2-like protein 2 (621 aa).

Residues 1–31 (MSEATWWYRGGTSKHDLHYRREAEVNTTLEE) are Cytoplasmic-facing. The chain crosses the membrane as a helical span at residues 32–52 (LLLYFIFLINLCILTFGMVNP). Residues 53 to 277 (HMYYLNKVMS…SVKLLRYVSY (225 aa)) are Extracellular-facing. Residues Asn115 and Asn138 are each glycosylated (N-linked (GlcNAc...) asparagine). Residues 278–298 (YDYFIASCEVIFCIFLFVFII) form a helical membrane-spanning segment. Residues 299–314 (QELRKVNEFKSAYFRS) lie on the Cytoplasmic side of the membrane. Residues 315-335 (VWNWLEMLLLLLCFLAVSFYA) traverse the membrane as a helical segment. Residues 336-360 (YCNMQSFLLLGQLLKNTDSYPDFYF) lie on the Extracellular side of the membrane. Residues 361 to 381 (LAYWHIYYNNVIAITIFFAWI) traverse the membrane as a helical segment. Residues 382-406 (KIFKFISFNETMSQLSSTLSRCMKD) lie on the Cytoplasmic side of the membrane. A helical transmembrane segment spans residues 407–427 (IVGFAIMFFIIFSAYAQLGFL). Over 428 to 468 (VFGSQVDDFSTFQNSIFAQFRIVLGDFNFAGIQQANWILGP) the chain is Extracellular. Residues 469 to 489 (IYFITFIFFVFFVLLNMFLAI) form a helical membrane-spanning segment. The Cytoplasmic portion of the chain corresponds to 490-621 (INDTYSEVKA…KLNQLMRKLH (132 aa)). The stretch at 521 to 551 (NVLEKLRLKKAQAKEEKKMQTTDLAQRARRD) forms a coiled coil.

This sequence belongs to the polycystin family. In terms of assembly, interacts with TRPC1 and TRPC5. As to expression, expressed only in testis and heart.

It localises to the membrane. Exhibits a lower single conductance but no spontaneous channel activity. May function as a regulator of calcium channels or a channel component involving Ca2(+) homeostasis. This Mus musculus (Mouse) protein is Polycystin-2-like protein 2.